The following is a 306-amino-acid chain: tRNA dimethylallyltransferase (306 aa).

11-18 is a binding site for ATP; sequence GPTAVGKS. 13-18 is a binding site for substrate; that stretch reads TAVGKS. The interaction with substrate tRNA stretch occupies residues 35 to 38; the sequence is DSIQ.

Belongs to the IPP transferase family. Monomer. The cofactor is Mg(2+).

It catalyses the reaction adenosine(37) in tRNA + dimethylallyl diphosphate = N(6)-dimethylallyladenosine(37) in tRNA + diphosphate. In terms of biological role, catalyzes the transfer of a dimethylallyl group onto the adenine at position 37 in tRNAs that read codons beginning with uridine, leading to the formation of N6-(dimethylallyl)adenosine (i(6)A). This is tRNA dimethylallyltransferase from Borreliella burgdorferi (strain ATCC 35210 / DSM 4680 / CIP 102532 / B31) (Borrelia burgdorferi).